The chain runs to 618 residues: Proline--tRNA ligase (618 aa).

This sequence belongs to the class-II aminoacyl-tRNA synthetase family. ProS type 1 subfamily. In terms of assembly, homodimer.

It localises to the cytoplasm. The catalysed reaction is tRNA(Pro) + L-proline + ATP = L-prolyl-tRNA(Pro) + AMP + diphosphate. Catalyzes the attachment of proline to tRNA(Pro) in a two-step reaction: proline is first activated by ATP to form Pro-AMP and then transferred to the acceptor end of tRNA(Pro). As ProRS can inadvertently accommodate and process non-cognate amino acids such as alanine and cysteine, to avoid such errors it has two additional distinct editing activities against alanine. One activity is designated as 'pretransfer' editing and involves the tRNA(Pro)-independent hydrolysis of activated Ala-AMP. The other activity is designated 'posttransfer' editing and involves deacylation of mischarged Ala-tRNA(Pro). The misacylated Cys-tRNA(Pro) is not edited by ProRS. The polypeptide is Proline--tRNA ligase (Streptococcus uberis (strain ATCC BAA-854 / 0140J)).